A 551-amino-acid chain; its full sequence is Hydroxylamine reductase (551 aa).

Residues C3, C6, C18, and C25 each contribute to the [2Fe-2S] cluster site. Hybrid [4Fe-2O-2S] cluster contacts are provided by H249, E273, C317, C405, C433, C458, E492, and K494. C405 is subject to Cysteine persulfide.

This sequence belongs to the HCP family. It depends on [2Fe-2S] cluster as a cofactor. Requires hybrid [4Fe-2O-2S] cluster as cofactor.

The protein localises to the cytoplasm. The enzyme catalyses A + NH4(+) + H2O = hydroxylamine + AH2 + H(+). Catalyzes the reduction of hydroxylamine to form NH(3) and H(2)O. The chain is Hydroxylamine reductase from Edwardsiella ictaluri (strain 93-146).